The chain runs to 203 residues: Ras-related protein Rab-30 (203 aa).

GTP is bound by residues Val-20, Gly-21, Lys-22, Thr-23, Cys-24, and Thr-41. Thr-23 provides a ligand contact to Mg(2+). The segment at 36 to 44 (PGQGATIGV) is switch-I. Mg(2+) is bound by residues Thr-41 and Asp-64. Residues Gly-67, Asn-122, Lys-123, Asp-125, Ala-153, and Lys-154 each contribute to the GTP site. The interval 67 to 83 (GQERFRSITQSYYRSAN) is switch-II. Residues Cys-199 and Cys-200 are each lipidated (S-geranylgeranyl cysteine). Cys-200 carries the post-translational modification Cysteine methyl ester. Positions 201–203 (NFN) are cleaved as a propeptide — removed in mature form.

This sequence belongs to the small GTPase superfamily. Rab family. The cofactor is Mg(2+).

It localises to the membrane. The protein localises to the golgi apparatus. The protein resides in the trans-Golgi network membrane. It is found in the cis-Golgi network membrane. Its subcellular location is the golgi apparatus membrane. It localises to the cytoplasm. The protein localises to the cytoplasmic vesicle. The protein resides in the autophagosome membrane. It is found in the autolysosome membrane. It carries out the reaction GTP + H2O = GDP + phosphate + H(+). Regulated by guanine nucleotide exchange factors (GEFs) which promote the exchange of bound GDP for free GTP. Regulated by GTPase activating proteins (GAPs) which increase the GTP hydrolysis activity. Inhibited by GDP dissociation inhibitors (GDIs). Functionally, the small GTPases Rab are key regulators of intracellular membrane trafficking, from the formation of transport vesicles to their fusion with membranes. Rabs cycle between an inactive GDP-bound form and an active GTP-bound form that is able to recruit to membranes different sets of downstream effectors directly responsible for vesicle formation, movement, tethering and fusion. RAB30 is required for maintaining the structural integrity of the Golgi apparatus, possibly by mediating interactions with cytoplasmic scaffolding proteins. Facilitates lipid homeostasis during fasting by regulating hepatic protein and lipid trafficking in a PPAR-alpha-dependent manner. Promotes autophagosome biogenesis during bacterial infection such as group A Streptococcus infection. The sequence is that of Ras-related protein Rab-30 (RAB30) from Bos taurus (Bovine).